Here is a 243-residue protein sequence, read N- to C-terminus: Pyridoxine 5'-phosphate synthase (243 aa).

Position 9 (Asn-9) interacts with 3-amino-2-oxopropyl phosphate. 1-deoxy-D-xylulose 5-phosphate is bound at residue 11–12 (DH). Arg-20 contributes to the 3-amino-2-oxopropyl phosphate binding site. The active-site Proton acceptor is the His-45. Arg-47 and His-52 together coordinate 1-deoxy-D-xylulose 5-phosphate. Glu-72 serves as the catalytic Proton acceptor. A 1-deoxy-D-xylulose 5-phosphate-binding site is contributed by Thr-102. His-193 serves as the catalytic Proton donor. Residues Gly-194 and 215 to 216 (GH) contribute to the 3-amino-2-oxopropyl phosphate site.

This sequence belongs to the PNP synthase family. In terms of assembly, homooctamer; tetramer of dimers.

It is found in the cytoplasm. It catalyses the reaction 3-amino-2-oxopropyl phosphate + 1-deoxy-D-xylulose 5-phosphate = pyridoxine 5'-phosphate + phosphate + 2 H2O + H(+). Its pathway is cofactor biosynthesis; pyridoxine 5'-phosphate biosynthesis; pyridoxine 5'-phosphate from D-erythrose 4-phosphate: step 5/5. Catalyzes the complicated ring closure reaction between the two acyclic compounds 1-deoxy-D-xylulose-5-phosphate (DXP) and 3-amino-2-oxopropyl phosphate (1-amino-acetone-3-phosphate or AAP) to form pyridoxine 5'-phosphate (PNP) and inorganic phosphate. The polypeptide is Pyridoxine 5'-phosphate synthase (Yersinia pestis).